We begin with the raw amino-acid sequence, 293 residues long: uncharacterized protein (293 aa).

To M.jannaschii MJ1614 and MJ0008.

This is an uncharacterized protein from Methanocaldococcus jannaschii (strain ATCC 43067 / DSM 2661 / JAL-1 / JCM 10045 / NBRC 100440) (Methanococcus jannaschii).